Here is a 286-residue protein sequence, read N- to C-terminus: Phosphatidylserine decarboxylase proenzyme (286 aa).

Residues Asp91, His148, and Ser251 each act as charge relay system; for autoendoproteolytic cleavage activity in the active site. Ser251 (schiff-base intermediate with substrate; via pyruvic acid; for decarboxylase activity) is an active-site residue. Ser251 bears the Pyruvic acid (Ser); by autocatalysis mark.

Belongs to the phosphatidylserine decarboxylase family. PSD-B subfamily. Prokaryotic type I sub-subfamily. Heterodimer of a large membrane-associated beta subunit and a small pyruvoyl-containing alpha subunit. Pyruvate serves as cofactor. Is synthesized initially as an inactive proenzyme. Formation of the active enzyme involves a self-maturation process in which the active site pyruvoyl group is generated from an internal serine residue via an autocatalytic post-translational modification. Two non-identical subunits are generated from the proenzyme in this reaction, and the pyruvate is formed at the N-terminus of the alpha chain, which is derived from the carboxyl end of the proenzyme. The autoendoproteolytic cleavage occurs by a canonical serine protease mechanism, in which the side chain hydroxyl group of the serine supplies its oxygen atom to form the C-terminus of the beta chain, while the remainder of the serine residue undergoes an oxidative deamination to produce ammonia and the pyruvoyl prosthetic group on the alpha chain. During this reaction, the Ser that is part of the protease active site of the proenzyme becomes the pyruvoyl prosthetic group, which constitutes an essential element of the active site of the mature decarboxylase.

It is found in the cell membrane. It carries out the reaction a 1,2-diacyl-sn-glycero-3-phospho-L-serine + H(+) = a 1,2-diacyl-sn-glycero-3-phosphoethanolamine + CO2. Its pathway is phospholipid metabolism; phosphatidylethanolamine biosynthesis; phosphatidylethanolamine from CDP-diacylglycerol: step 2/2. Functionally, catalyzes the formation of phosphatidylethanolamine (PtdEtn) from phosphatidylserine (PtdSer). The polypeptide is Phosphatidylserine decarboxylase proenzyme (Marinobacter nauticus (strain ATCC 700491 / DSM 11845 / VT8) (Marinobacter aquaeolei)).